The following is a 103-amino-acid chain: Urease subunit beta (103 aa).

Belongs to the urease beta subunit family. Heterotrimer of UreA (gamma), UreB (beta) and UreC (alpha) subunits. Three heterotrimers associate to form the active enzyme.

It is found in the cytoplasm. The catalysed reaction is urea + 2 H2O + H(+) = hydrogencarbonate + 2 NH4(+). The protein operates within nitrogen metabolism; urea degradation; CO(2) and NH(3) from urea (urease route): step 1/1. In terms of biological role, ureolysis may allow urea to be employed as a nitrogen source for growth and produces ammonia which may protect from killing at low pH. The protein is Urease subunit beta of Streptococcus salivarius (strain 57.I).